Consider the following 420-residue polypeptide: MYVAHLSLHDFRSYATAEVELSPGVTAFIGRNGQGKTNLVEAIDYLSRLSSHRVASDAPLVRAGADQAVVRAAVVRDGRTAVLEVELNPGRSNRARVNRSPLPRARDLVGLVRTVVFSPEDLTLVKGDPADRRRFLDDLLVLRVPRLAGVRADYDRVLRQRNTLLKTARKGGFARKGGFARKGGFAPLGPPEGRPEGPPEGRTGGSATSGPPSRSVALDTLAVWDAHLARTGAELLAERLALVEALRPYVGKAYETVARGATRDDAEIDYKPSFDLEGRTGRDDLVEALLAEVERRRGDELDRGVSLVGPHRDELLLTLGHGSPDSRLPVKGYASHGESWSFALALRLAAYDLLRADGDDPILILDDVFAELDTERRAQLADLVAGAEQVLVTAAVAADVPAGLAGARFAVGNGEVLREQ.

30 to 37 contributes to the ATP binding site; it reads GRNGQGKT. The disordered stretch occupies residues 175-214; the sequence is RKGGFARKGGFAPLGPPEGRPEGPPEGRTGGSATSGPPSR.

This sequence belongs to the RecF family.

Its subcellular location is the cytoplasm. Its function is as follows. The RecF protein is involved in DNA metabolism; it is required for DNA replication and normal SOS inducibility. RecF binds preferentially to single-stranded, linear DNA. It also seems to bind ATP. This is DNA replication and repair protein RecF from Nocardioides sp. (strain ATCC BAA-499 / JS614).